Reading from the N-terminus, the 369-residue chain is Aminomethyltransferase (369 aa).

This sequence belongs to the GcvT family. As to quaternary structure, the glycine cleavage system is composed of four proteins: P, T, L and H.

It catalyses the reaction N(6)-[(R)-S(8)-aminomethyldihydrolipoyl]-L-lysyl-[protein] + (6S)-5,6,7,8-tetrahydrofolate = N(6)-[(R)-dihydrolipoyl]-L-lysyl-[protein] + (6R)-5,10-methylene-5,6,7,8-tetrahydrofolate + NH4(+). Functionally, the glycine cleavage system catalyzes the degradation of glycine. In Rippkaea orientalis (strain PCC 8801 / RF-1) (Cyanothece sp. (strain PCC 8801)), this protein is Aminomethyltransferase.